A 198-amino-acid chain; its full sequence is Pyridoxal 5'-phosphate synthase subunit PdxT (198 aa).

An L-glutamine-binding site is contributed by G52–S54. C84 serves as the catalytic Nucleophile. L-glutamine is bound by residues R115 and I143–R144. Active-site charge relay system residues include H179 and E181.

It belongs to the glutaminase PdxT/SNO family. In terms of assembly, in the presence of PdxS, forms a dodecamer of heterodimers. Only shows activity in the heterodimer.

The catalysed reaction is aldehydo-D-ribose 5-phosphate + D-glyceraldehyde 3-phosphate + L-glutamine = pyridoxal 5'-phosphate + L-glutamate + phosphate + 3 H2O + H(+). The enzyme catalyses L-glutamine + H2O = L-glutamate + NH4(+). Its pathway is cofactor biosynthesis; pyridoxal 5'-phosphate biosynthesis. Functionally, catalyzes the hydrolysis of glutamine to glutamate and ammonia as part of the biosynthesis of pyridoxal 5'-phosphate. The resulting ammonia molecule is channeled to the active site of PdxS. The protein is Pyridoxal 5'-phosphate synthase subunit PdxT of Methanococcoides burtonii (strain DSM 6242 / NBRC 107633 / OCM 468 / ACE-M).